A 514-amino-acid polypeptide reads, in one-letter code: Peptide chain release factor 3 (514 aa).

Residues 8–268 (KKRRTFAIIS…TFLEFAPEPH (261 aa)) form the tr-type G domain. Residues 17–24 (SHPDAGKT), 85–89 (DTPGH), and 139–142 (NKLD) contribute to the GTP site.

This sequence belongs to the TRAFAC class translation factor GTPase superfamily. Classic translation factor GTPase family. PrfC subfamily.

It is found in the cytoplasm. Its function is as follows. Increases the formation of ribosomal termination complexes and stimulates activities of RF-1 and RF-2. It binds guanine nucleotides and has strong preference for UGA stop codons. It may interact directly with the ribosome. The stimulation of RF-1 and RF-2 is significantly reduced by GTP and GDP, but not by GMP. The protein is Peptide chain release factor 3 of Streptococcus pyogenes serotype M18 (strain MGAS8232).